Reading from the N-terminus, the 198-residue chain is FMN-dependent NADH:quinone oxidoreductase (198 aa).

96–99 (MYNF) contacts FMN.

The protein belongs to the azoreductase type 1 family. Homodimer. The cofactor is FMN.

It catalyses the reaction 2 a quinone + NADH + H(+) = 2 a 1,4-benzosemiquinone + NAD(+). The enzyme catalyses N,N-dimethyl-1,4-phenylenediamine + anthranilate + 2 NAD(+) = 2-(4-dimethylaminophenyl)diazenylbenzoate + 2 NADH + 2 H(+). Its function is as follows. Quinone reductase that provides resistance to thiol-specific stress caused by electrophilic quinones. In terms of biological role, also exhibits azoreductase activity. Catalyzes the reductive cleavage of the azo bond in aromatic azo compounds to the corresponding amines. The sequence is that of FMN-dependent NADH:quinone oxidoreductase from Burkholderia thailandensis (strain ATCC 700388 / DSM 13276 / CCUG 48851 / CIP 106301 / E264).